A 412-amino-acid polypeptide reads, in one-letter code: Multifunctional CCA protein (412 aa).

Residues glycine 8 and arginine 11 each coordinate ATP. Residues glycine 8 and arginine 11 each coordinate CTP. Glutamate 21 and aspartate 23 together coordinate Mg(2+). ATP-binding residues include arginine 91, arginine 137, and arginine 140. CTP is bound by residues arginine 91, arginine 137, and arginine 140. Residues 228–329 enclose the HD domain; it reads CGIHTLMSLQ…WRLLQRLDVL (102 aa).

It belongs to the tRNA nucleotidyltransferase/poly(A) polymerase family. Bacterial CCA-adding enzyme type 1 subfamily. Monomer. Can also form homodimers and oligomers. Requires Mg(2+) as cofactor. Ni(2+) is required as a cofactor.

The enzyme catalyses a tRNA precursor + 2 CTP + ATP = a tRNA with a 3' CCA end + 3 diphosphate. It carries out the reaction a tRNA with a 3' CCA end + 2 CTP + ATP = a tRNA with a 3' CCACCA end + 3 diphosphate. Its function is as follows. Catalyzes the addition and repair of the essential 3'-terminal CCA sequence in tRNAs without using a nucleic acid template. Adds these three nucleotides in the order of C, C, and A to the tRNA nucleotide-73, using CTP and ATP as substrates and producing inorganic pyrophosphate. tRNA 3'-terminal CCA addition is required both for tRNA processing and repair. Also involved in tRNA surveillance by mediating tandem CCA addition to generate a CCACCA at the 3' terminus of unstable tRNAs. While stable tRNAs receive only 3'-terminal CCA, unstable tRNAs are marked with CCACCA and rapidly degraded. This chain is Multifunctional CCA protein, found in Acinetobacter baumannii (strain AB307-0294).